The following is a 208-amino-acid chain: Ubiquinone biosynthesis protein COQ4 homolog, mitochondrial (208 aa).

Zn(2+)-binding residues include H105, D106, H109, and E122.

Belongs to the COQ4 family. Component of a multi-subunit COQ enzyme complex. The cofactor is Zn(2+).

It localises to the mitochondrion inner membrane. It catalyses the reaction a 4-hydroxy-3-methoxy-5-(all-trans-polyprenyl)benzoate + H(+) = a 2-methoxy-6-(all-trans-polyprenyl)phenol + CO2. It functions in the pathway cofactor biosynthesis; ubiquinone biosynthesis. Lyase that catalyzes the C1-decarboxylation of 4-hydroxy-3-methoxy-5-(all-trans-polyprenyl)benzoic acid into 2-methoxy-6-(all-trans-polyprenyl)phenol during ubiquinone biosynthesis. The polypeptide is Ubiquinone biosynthesis protein COQ4 homolog, mitochondrial (Nematostella vectensis (Starlet sea anemone)).